The following is a 107-amino-acid chain: Nucleoid-associated protein RT0857 (107 aa).

It belongs to the YbaB/EbfC family. Homodimer.

It is found in the cytoplasm. The protein resides in the nucleoid. Its function is as follows. Binds to DNA and alters its conformation. May be involved in regulation of gene expression, nucleoid organization and DNA protection. The protein is Nucleoid-associated protein RT0857 of Rickettsia typhi (strain ATCC VR-144 / Wilmington).